Here is a 204-residue protein sequence, read N- to C-terminus: MIGRLQGILLEKQPPEILLNVQGVGYELLLPMTSFYDLPEIGQETTLFTHLVVREDAHLLFGFAQKTDRTLFRELIKTNGVGPKLALAILSAMSVEQFAYAIEREELSKLTKIPGVGKKTAERLLVELKGKFKGVKQSDFFVESTHIPLSPSIESHSESSSDEAISALIALGYKPVEAEKMVKRVAKPELTSEQVIREALKAAL.

Residues 1–64 are domain I; it reads MIGRLQGILL…EDAHLLFGFA (64 aa). Residues 65–143 are domain II; it reads QKTDRTLFRE…GVKQSDFFVE (79 aa). A flexible linker region spans residues 144–155; it reads STHIPLSPSIES. The tract at residues 156-204 is domain III; the sequence is HSESSSDEAISALIALGYKPVEAEKMVKRVAKPELTSEQVIREALKAAL.

The protein belongs to the RuvA family. Homotetramer. Forms an RuvA(8)-RuvB(12)-Holliday junction (HJ) complex. HJ DNA is sandwiched between 2 RuvA tetramers; dsDNA enters through RuvA and exits via RuvB. An RuvB hexamer assembles on each DNA strand where it exits the tetramer. Each RuvB hexamer is contacted by two RuvA subunits (via domain III) on 2 adjacent RuvB subunits; this complex drives branch migration. In the full resolvosome a probable DNA-RuvA(4)-RuvB(12)-RuvC(2) complex forms which resolves the HJ.

It is found in the cytoplasm. In terms of biological role, the RuvA-RuvB-RuvC complex processes Holliday junction (HJ) DNA during genetic recombination and DNA repair, while the RuvA-RuvB complex plays an important role in the rescue of blocked DNA replication forks via replication fork reversal (RFR). RuvA specifically binds to HJ cruciform DNA, conferring on it an open structure. The RuvB hexamer acts as an ATP-dependent pump, pulling dsDNA into and through the RuvAB complex. HJ branch migration allows RuvC to scan DNA until it finds its consensus sequence, where it cleaves and resolves the cruciform DNA. This chain is Holliday junction branch migration complex subunit RuvA, found in Haemophilus influenzae (strain PittEE).